Consider the following 158-residue polypeptide: MAAQEKIPMLIEGQQMLMDELARLHAERPKIIDAIEEARAHGDLSENAEYHAAKERQGQVEAMIGDIEGKLSRALVIDPKTLSGDKVIFGATVHLLDEDDKPVKYQIVGQTEANAKGGRISYNSPLGRALIGRKVDDEIEVSVPSGDRYYLISKIEFI.

This sequence belongs to the GreA/GreB family.

Necessary for efficient RNA polymerase transcription elongation past template-encoded arresting sites. The arresting sites in DNA have the property of trapping a certain fraction of elongating RNA polymerases that pass through, resulting in locked ternary complexes. Cleavage of the nascent transcript by cleavage factors such as GreA or GreB allows the resumption of elongation from the new 3'terminus. GreA releases sequences of 2 to 3 nucleotides. The polypeptide is Transcription elongation factor GreA (Zymomonas mobilis subsp. mobilis (strain ATCC 31821 / ZM4 / CP4)).